The primary structure comprises 436 residues: Chromosomal replication initiator protein DnaA (436 aa).

Residues 1–69 (MLADEVLELL…AHLFEVKTGT (69 aa)) are domain I, interacts with DnaA modulators. Residues 69–99 (TKPNVEITTQTKLKSSKQNQVNIKQIKAQST) are domain II. Residues 100-314 (LLNPAYTFEN…SAIINLNAYA (215 aa)) form a domain III, AAA+ region region. Residues glycine 144, glycine 146, lysine 147, and threonine 148 each coordinate ATP. The interval 315–436 (NLMRQEITLD…ELKNKILTKG (122 aa)) is domain IV, binds dsDNA.

This sequence belongs to the DnaA family. As to quaternary structure, oligomerizes as a right-handed, spiral filament on DNA at oriC.

It is found in the cytoplasm. Functionally, plays an essential role in the initiation and regulation of chromosomal replication. ATP-DnaA binds to the origin of replication (oriC) to initiate formation of the DNA replication initiation complex once per cell cycle. Binds the DnaA box (a 9 base pair repeat at the origin) and separates the double-stranded (ds)DNA. Forms a right-handed helical filament on oriC DNA; dsDNA binds to the exterior of the filament while single-stranded (ss)DNA is stabiized in the filament's interior. The ATP-DnaA-oriC complex binds and stabilizes one strand of the AT-rich DNA unwinding element (DUE), permitting loading of DNA polymerase. After initiation quickly degrades to an ADP-DnaA complex that is not apt for DNA replication. Binds acidic phospholipids. This is Chromosomal replication initiator protein DnaA from Campylobacter curvus (strain 525.92).